Consider the following 301-residue polypeptide: Helicase VP6-A (301 aa).

Disordered regions lie at residues 1–99 (MIDW…TTGT) and 163–208 (RRKE…TSVG). Composition is skewed to basic and acidic residues over residues 8 to 30 (ESGK…KDGE), 37 to 55 (GQKK…DRRV), and 67 to 81 (GFRE…RGDG). Residue Lys82 coordinates ATP. Basic and acidic residues-rich tracts occupy residues 163 to 177 (RRKE…VAEK) and 186 to 202 (VHGD…KTPE).

It belongs to the orbivirus VP6 family. As to quaternary structure, homohexamer.

The protein localises to the virion. It carries out the reaction ATP + H2O = ADP + phosphate + H(+). ATP dependent RNA helicase essential for RNA packaging and viral transcription. Possesses ss- and dsRNA-binding capacity. The polypeptide is Helicase VP6-A (Segment-9) (Bluetongue virus 2 (isolate USA) (BTV 2)).